Here is a 4023-residue protein sequence, read N- to C-terminus: Hybrid PKS-NRPS synthetase pvhA (4023 aa).

The region spanning 7-440 is the Ketosynthase family 3 (KS3) domain; it reads DERIAVIGTG…GTNAHAIIEE (434 aa). Residues C180, H319, and H360 each act as for beta-ketoacyl synthase activity in the active site. The tract at residues 550–871 is malonyl-CoA:ACP transacylase (MAT) domain; that stretch reads VFTGQGAQWA…PYVGLLGRGK (322 aa). The segment at 945–1080 is N-terminal hotdog fold; that stretch reads HPLLGKRCYD…GVVRATLAEN (136 aa). The tract at residues 945 to 1249 is dehydratase (DH) domain; the sequence is HPLLGKRCYD…QAEGLEIVPL (305 aa). In terms of domain architecture, PKS/mFAS DH spans 945-1255; it reads HPLLGKRCYD…IVPLAAAVPD (311 aa). The Proton acceptor; for dehydratase activity role is filled by H978. Residues 1099–1255 are C-terminal hotdog fold; the sequence is DLSPVDTERF…IVPLAAAVPD (157 aa). The active-site Proton donor; for dehydratase activity is D1160. The tract at residues 1402–1585 is methyltransferase (MT) domain; the sequence is AELYEKAIGF…GFSGTDTISP (184 aa). Residues 2120–2291 form a ketoreductase (KR) domain region; that stretch reads TYLLVGLTGE…GVAGSSINIS (172 aa). The 76-residue stretch at 2404-2479 folds into the Carrier 1 domain; it reads SIIKEVFLAR…GIIKQVVELL (76 aa). An O-(pantetheine 4'-phosphoryl)serine modification is found at S2439. The tract at residues 2490–2580 is disordered; the sequence is TPQTLSKNPA…VMSKPSASSQ (91 aa). Residues 2502 to 2529 show a composition bias toward low complexity; the sequence is PVKAPVSAPSTPAAASQPVLTDSTASSS. The segment covering 2565–2580 has biased composition (polar residues); it reads PVNTPNVMSKPSASSQ. Residues 2604–3043 are condensation (C) domain; sequence PMSHGQEGFW…DIPSWSELDI (440 aa). Positions 3072–3467 are adenylation (A) (KR) domain; that stretch reads EMITVHGSTT…DGTLVVEGRL (396 aa). The Carrier 2 domain maps to 3593-3670; the sequence is SVLSGTERQL…AMADAVQKEV (78 aa). O-(pantetheine 4'-phosphoryl)serine is present on S3630. The tract at residues 3783–3932 is reductase (RED) domain; that stretch reads ETDVIMHCVA…IAPVDDMAQS (150 aa).

In the C-terminal section; belongs to the NRP synthetase family.

Its pathway is secondary metabolite biosynthesis. In terms of biological role, hybrid PKS-NRPS synthetase; part of the gene cluster that mediates the biosynthesis of varicidin A, an antifungal natural product containing a cis-octahydrodecalin core. The PKS module of pvhA together with the enoylreductase pvhC catalyze the formation of the polyketide unit which is then conjugated to L-isoleucine by the condensation domain of the NRPS module. Activity of the Dieckmann cyclase domain (RED) of pvhA results in release of an acyclic tetramate. The cytochrome P450 monooxygenase pvhE then catalyzes the oxidation of the C21 methyl group to a to carboxylate group. The methyltransferase pvhD then further methylates the pvhE product. The Diels-Alderase pvhB is able to catalyze Diels-Alder cycloaddition using both pvhE and pvhD products as substrates to form the decalin ring, yielding varicidin B and A, respectively. The protein is Hybrid PKS-NRPS synthetase pvhA of Talaromyces variabilis (Penicillium variabile).